A 139-amino-acid chain; its full sequence is Spermatogenesis-associated protein 33 (139 aa).

The segment at 1-67 (MVTHAAGART…TAKHPPPAAS (67 aa)) is interaction with ATG16L1. The tract at residues 1–83 (MVTHAAGART…VKQKSSRKKV (83 aa)) is disordered. A compositionally biased stretch (basic and acidic residues) spans 25 to 50 (KSKEKLMEKHSQEARQADRESEKPVD). Positions 68 to 139 (LEEKPDVKQK…ADAYNSHLKE (72 aa)) are interaction with VDAC2. The short motif at 86 to 91 (PQIIIT) is the PQIIIT element. Ser94 carries the phosphoserine modification. Positions 97–109 (TLVSCSSSGSDQQ) are enriched in polar residues. Residues 97-139 (TLVSCSSSGSDQQRTIREPEDWGPYRRHRNPSTADAYNSHLKE) form a disordered region. The span at 110-120 (RTIREPEDWGP) shows a compositional bias: basic and acidic residues.

Interacts (via PQIIIT motif) with PPP3R1, PPP3R2, PPP3CA, PPP3CB and PPP3CC. Interacts with VDAC2. Interacts with ATG16L1 (via WD repeats).

It localises to the cytoplasm. Its subcellular location is the cytosol. It is found in the nucleus. The protein localises to the mitochondrion. In terms of biological role, plays an important role in sperm motility and male fertility. Required for sperm midpiece flexibility and for the localization of sperm calcineurin to the mitochondria. Promotes mitophagy as well as acts as an autophagy mediator in male germline cells. Links damaged mitochondria to autophagosomes via its binding to the outer mitochondrial membrane protein VDAC2, as well as to key autophagy machinery component ATG16L1. This chain is Spermatogenesis-associated protein 33 (SPATA33), found in Homo sapiens (Human).